A 404-amino-acid chain; its full sequence is cAMP-dependent protein kinase regulatory subunit (404 aa).

Residues 14 to 144 (LTDHELLRIP…RLKTAIAGNF (131 aa)) are dimerization and phosphorylation. Serine 105 bears the Phosphoserine mark. Residues 145-276 (LFSH…EKFP), glutamate 223, arginine 232, 277-398 (CCRH…GVEE), glutamate 344, and arginine 353 contribute to the 3',5'-cyclic AMP site.

The protein belongs to the cAMP-dependent kinase regulatory chain family. In terms of assembly, tetramer, composed of 2 regulatory (R) and 2 catalytic (C) subunits. In the presence of cAMP it dissociates into 2 active monomeric C subunits and an R dimer.

Its function is as follows. cAMP-dependent protein kinase PKA regulatory subunit. This Colletotrichum trifolii protein is cAMP-dependent protein kinase regulatory subunit (PKAR).